Reading from the N-terminus, the 654-residue chain is Translation factor GUF1, mitochondrial (654 aa).

The region spanning 57-237 is the tr-type G domain; sequence ENYRNFSIVA…SVIKNIPSPV (181 aa). Residues 66-73, 130-134, and 184-187 each bind GTP; these read AHVDHGKS, DTPGH, and NKID.

Belongs to the TRAFAC class translation factor GTPase superfamily. Classic translation factor GTPase family. LepA subfamily.

It is found in the mitochondrion inner membrane. It carries out the reaction GTP + H2O = GDP + phosphate + H(+). In terms of biological role, promotes mitochondrial protein synthesis. May act as a fidelity factor of the translation reaction, by catalyzing a one-codon backward translocation of tRNAs on improperly translocated ribosomes. Binds to mitochondrial ribosomes in a GTP-dependent manner. The protein is Translation factor GUF1, mitochondrial of Candida albicans (strain SC5314 / ATCC MYA-2876) (Yeast).